A 1770-amino-acid polypeptide reads, in one-letter code: MESQQLSQNSPTFHGSAYASVTSKEVPSNQDPLAVSASNLPEFDRDSTKVNSQQETTPGTSAVPENHHHVSPQPASVPPPQNGQYQQHGMMTPNKAMASNWAHYQQPSMMTCSHYQTSPAYYQPDPHYPLPQYIPPLSTSSPDPIGSQDQHSEVPQAKTKVRNNVLPPHTLTSEENFSTWVKFYIRFLKNSNLGDIIPNDQGEIKRQMTYEEHAYIYNTFQAFAPFHLLPTWVKQILEINYSDILTVLCKSVSKMQTNNQELKDWIALANLEYNGSTSADTFEITVSTIIQRLKENNINVSDRLACQLILKGLSGDFKYLRNQYRTKTNMKLSQLFAEIQLIYDENKIMNLNKPSQYKQHSEYKNVSRTSPNTTNTKVTTRNYHRTNSSKPRAAKAHNIATSSKFSRVNNDHINESTVSSQYLSDDNELSLGQQQKESKPTRTIDSNDELPDHLLIDSGASQTLVRSAHYLHHATPNSEINIVDAQKQDIPINAIGNLHFNFQNGTKTSIKALHTPNIAYDLLSLSELANQNITACFTRNTLERSDGTVLAPIVKHGDFYWLSKKYLIPSHISKLTINNVNKSKSVNKYPYPLIHRMLGHANFRSIQKSLKKNAVTYLKESDIEWSNASTYQCPDCLIGKSTKHRHVKGSRLKYQESYEPFQYLHTDIFGPVHHLPKSAPSYFISFTDEKTRFQWVYPLHDRREESILNVFTSILAFIKNQFNARVLVIQMDRGSEYTNKTLHKFFTNRGITACYTTTADSRAHGVAERLNRTLLNDCRTLLHCSGLPNHLWFSAVEFSTIIRNSLVSPKNDKSARQHAGLAGLDITTILPFGQPVIVNNHNPDSKIHPRGIPGYALHPSRNSYGYIIYLPSLKKTVDTTNYVILQNKQTKLDQFDYDTLTFDDDLNRLTAHNQSFIEQNETEQSYDQNTESDHDYQSEIEINSDPLVNDFSSQSLNPLQLDKEPVQKVRAPKEVDADISEYNILPSTIRSRTPHIINKESTEMGGTIESDTTSPRHSSTFTARNQKRPGSPNDMIDLTSQDRVNYGLENIKTTRLGGTEEPYIQRNSDTNIKYRTTNSTPSIDDRSSNSESTTPIISIETKAACDNTPSIDTDPPEYRSSDHATPNIMPDKSSKNVTADSILDDLPLPDLTHQSPTDTSDVSKDIPHIHSRQTNSSLGGMDDSNVLTTTKSKKRSLEDNETEIEVSRDTWNNKNMRSLEPPRSKKRINLIAAIKGVKSIKPVRTTLRYDEAITYNKDNKEKDRYVEAYHKEISQLLKMNTWDTNKYYDRNDIDPKKVINSMFIFNKKRDGTHKARFVARGDIQHPDTYDSDMQSNTVHHYALMTSLSIALDNDYYITQLDISSAYLYADIKEELYIRPPPHLGLNDKLLRLRKSLYGLKQSGANWYETIKSYLINCCDMQEVRGWSCVFKNSQVTICLFVDDMILFSKDLNANKKIITTLKKQYDTKIINLGEGDNEIQYDILGLEIKYQRSKYMKLGMEKSLTEKLPKLNVPLNPKGKKLRAPGQPGHYIDQDELEIDEDEYKEKVHEMQKLIGLASYVGYKFRFDLLYYINTLAQHILFPSRQVLDMTYELIQFMWDTRDKQLIWHKNKPTKPDNKLVAISDASYGNQPYYKSQIGNIFLLNGKVIGGKSTKASLTCTSTTEAEIHAVSEAIPLLNNLSHLVQELNKKPIIKGLLTDSRSTISIIKSTNEEKFRNRFFGTKAMRLRDEVSGNNLYVYYIETNKNIADVMTKPLPIKTFKLLTNKWIH.

Composition is skewed to polar residues over residues Met1–Asn39 and Lys49–Thr60. Disordered regions lie at residues Met1 to His88 and Gln359 to Glu449. Residues Glu295–His397 are RNA-binding. Positions Thr369 to Arg381 are enriched in low complexity. Composition is skewed to polar residues over residues Ile399 to Val408 and Glu415 to Gln435. Residue Asp457 is the For protease activity; shared with dimeric partner of the active site. The tract at residues Asn579 to Cys636 is integrase-type zinc finger-like. An Integrase catalytic domain is found at Glu656–Pro831. Positions 667 and 732 each coordinate Mg(2+). 3 stretches are compositionally biased toward polar residues: residues Phe916–Asn929, Glu1009–Arg1024, and Gln1065–Ser1082. 3 disordered regions span residues Phe916–Asp935, Gly1005–Leu1038, and Gly1057–Glu1205. Positions Lys1193 to Arg1227 match the Bipartite nuclear localization signal motif. The Reverse transcriptase Ty1/copia-type domain occupies Asn1353 to Gln1491. The Mg(2+) site is built by Asp1361, Asp1442, Asp1443, Asp1625, Glu1667, and Asp1700. One can recognise an RNase H Ty1/copia-type domain in the interval Asp1625–Lys1767.

As to quaternary structure, the capsid protein forms a homotrimer, from which the VLPs are assembled. The protease is a homodimer, whose active site consists of two apposed aspartic acid residues. In terms of processing, initially, virus-like particles (VLPs) are composed of the structural unprocessed proteins Gag and Gag-Pol, and also contain the host initiator methionine tRNA (tRNA(i)-Met) which serves as a primer for minus-strand DNA synthesis, and a dimer of genomic Ty RNA. Processing of the polyproteins occurs within the particle and proceeds by an ordered pathway, called maturation. First, the protease (PR) is released by autocatalytic cleavage of the Gag-Pol polyprotein, and this cleavage is a prerequisite for subsequent processing at the remaining sites to release the mature structural and catalytic proteins. Maturation takes place prior to the RT reaction and is required to produce transposition-competent VLPs.

Its subcellular location is the cytoplasm. It localises to the nucleus. The catalysed reaction is DNA(n) + a 2'-deoxyribonucleoside 5'-triphosphate = DNA(n+1) + diphosphate. The enzyme catalyses Endonucleolytic cleavage to 5'-phosphomonoester.. Its function is as follows. Capsid protein (CA) is the structural component of the virus-like particle (VLP), forming the shell that encapsulates the retrotransposons dimeric RNA genome. The particles are assembled from trimer-clustered units and there are holes in the capsid shells that allow for the diffusion of macromolecules. CA also has nucleocapsid-like chaperone activity, promoting primer tRNA(i)-Met annealing to the multipartite primer-binding site (PBS), dimerization of Ty2 RNA and initiation of reverse transcription. Functionally, the aspartyl protease (PR) mediates the proteolytic cleavages of the Gag and Gag-Pol polyproteins after assembly of the VLP. Reverse transcriptase/ribonuclease H (RT) is a multifunctional enzyme that catalyzes the conversion of the retro-elements RNA genome into dsDNA within the VLP. The enzyme displays a DNA polymerase activity that can copy either DNA or RNA templates, and a ribonuclease H (RNase H) activity that cleaves the RNA strand of RNA-DNA heteroduplexes during plus-strand synthesis and hydrolyzes RNA primers. The conversion leads to a linear dsDNA copy of the retrotransposon that includes long terminal repeats (LTRs) at both ends. In terms of biological role, integrase (IN) targets the VLP to the nucleus, where a subparticle preintegration complex (PIC) containing at least integrase and the newly synthesized dsDNA copy of the retrotransposon must transit the nuclear membrane. Once in the nucleus, integrase performs the integration of the dsDNA into the host genome. This is Transposon Ty2-OR1 Gag-Pol polyprotein (TY2B-OR1) from Saccharomyces cerevisiae (strain ATCC 204508 / S288c) (Baker's yeast).